Here is a 244-residue protein sequence, read N- to C-terminus: 1-(5-phosphoribosyl)-5-[(5-phosphoribosylamino)methylideneamino] imidazole-4-carboxamide isomerase (244 aa).

Asp-15 acts as the Proton acceptor in catalysis. The active-site Proton donor is the Asp-136.

Belongs to the HisA/HisF family.

Its subcellular location is the cytoplasm. It carries out the reaction 1-(5-phospho-beta-D-ribosyl)-5-[(5-phospho-beta-D-ribosylamino)methylideneamino]imidazole-4-carboxamide = 5-[(5-phospho-1-deoxy-D-ribulos-1-ylimino)methylamino]-1-(5-phospho-beta-D-ribosyl)imidazole-4-carboxamide. The protein operates within amino-acid biosynthesis; L-histidine biosynthesis; L-histidine from 5-phospho-alpha-D-ribose 1-diphosphate: step 4/9. The protein is 1-(5-phosphoribosyl)-5-[(5-phosphoribosylamino)methylideneamino] imidazole-4-carboxamide isomerase of Dehalococcoides mccartyi (strain CBDB1).